We begin with the raw amino-acid sequence, 695 residues long: MGAKEKLEAMLNVALRVPSIMLLDVLYRWDVSSFFKQIQRSSLNNNPLFQYKYLALNMHYVGYILSVVLLTLPRQHLAKLYLYFVAALLLYAGHQISRDYVRSELESGYEGPMHIEPLSMNRFITALVGQLVVCTLCSCVMKTKQIWLFSAHMLPLLARLCLVPIETIVVINKFAMIFTGLEVLYFLASNLLVPFNLAKSAYRELAQVVEVYGLLALGMSLWNQLVVPVLFMVFWLVLFALQIYTYFSTRDQPTSRERLLFLFLTSIAECCSTPYSLLGLVFTVSFVALGVLTLCKFYLQGYRAFMNDPAMNRGMTEGVTLLILAVQTGLIELQVVHRAFLLSIILFIVVASILQSMLEIADPIVLALGASRDKSLWKHFRAVSLCLFLLVFPSYMAYMICQFFHMDFWLLIIISSSILTSLQVLGTLFIYVLFMIEEFRKEPVENMDDVIYYVNGTYRLLEFLVALCVVAYGVSETVFGEWTVMGSMIIFIHSYYNVWLRAQLGWKSFLLRRDAVNKIKSLPVATKEQLEQHNDICSICYQDMNSAVITPCSHFFHPGCLKKWLYVQETCPLCHCQLKSLSQQATGESGSSTNPVSEQSATNPPLGPVSRAEVTTEPLAAVPTRSALEQEPTMDIKVSGSVEKRIGELEAHFSQGEANLNSNEVLQRLQAKGEANPEDLNVKALPPECEHCAEI.

A run of 13 helical transmembrane segments spans residues 53-73 (YLALNMHYVGYILSVVLLTLP), 77-97 (LAKLYLYFVAALLLYAGHQIS), 123-143 (FITALVGQLVVCTLCSCVMKT), 146-166 (IWLFSAHMLPLLARLCLVPIE), 168-188 (IVVINKFAMIFTGLEVLYFLA), 225-245 (LVVPVLFMVFWLVLFALQIYT), 275-295 (YSLLGLVFTVSFVALGVLTLC), 316-336 (TEGVTLLILAVQTGLIELQVV), 340-360 (FLLSIILFIVVASILQSMLEI), 384-404 (SLCLFLLVFPSYMAYMICQFF), 410-430 (LLIIISSSILTSLQVLGTLFI), 460-480 (LLEFLVALCVVAYGVSETVFG), and 482-502 (WTVMGSMIIFIHSYYNVWLRA). Residues 537 to 575 (CSICYQDMNSAVITPCSHFFHPGCLKKWLYVQETCPLCH) form an RING-type; atypical zinc finger. The span at 585–603 (ATGESGSSTNPVSEQSATN) shows a compositional bias: polar residues. Residues 585-610 (ATGESGSSTNPVSEQSATNPPLGPVS) form a disordered region.

The protein resides in the membrane. The polypeptide is RING finger protein 145 (rnf145) (Xenopus tropicalis (Western clawed frog)).